The primary structure comprises 185 residues: MIIEKRELEQLPERGEIIIDADGHIAGRLATYVAKALLERPSLRIVVVNAEKLVITGDRKMVIEWFKRKISEWRTHYNPEKAGPKIPRRPDRVFKRIVRGMLPKKNMRGRSALKRLRVYMSIPLEMLNRKKLVLYEVPLAKLKVKPLAKFVTLEEVWRNIDFAAWEQWKRAQEIWQKRIKQVTGG.

It belongs to the universal ribosomal protein uL13 family. Part of the 50S ribosomal subunit.

Its function is as follows. This protein is one of the early assembly proteins of the 50S ribosomal subunit, although it is not seen to bind rRNA by itself. It is important during the early stages of 50S assembly. The polypeptide is Large ribosomal subunit protein uL13 (Pyrobaculum islandicum (strain DSM 4184 / JCM 9189 / GEO3)).